The following is a 238-amino-acid chain: MGALLAFCLLVGLLRWGPAGAQQPGEYCHGWVDAQGNYHEGFQCPEDFDTQDATICCGSCALRYCCAAADARLEQGGCTNDRGELEHPGITAQPVYVPFLIVGSIFIAFIILGSLVAIYCCTCLRPKEPSQQPIRFSLRSYQTETLPMILTSTSLRAASRQSSTATSSSSTGGSVRRFSFARAEPSCLVPSSPPPYTTGHTIHLTQPSGFLVSPQYFAYPLQQEPPLPGKSCPDFSSS.

The first 21 residues, 1–21 (MGALLAFCLLVGLLRWGPAGA), serve as a signal peptide directing secretion. Topologically, residues 22-98 (QQPGEYCHGW…GITAQPVYVP (77 aa)) are lumenal. A helical membrane pass occupies residues 99 to 119 (FLIVGSIFIAFIILGSLVAIY). At 120–238 (CCTCLRPKEP…GKSCPDFSSS (119 aa)) the chain is on the cytoplasmic side.

This sequence belongs to the shisa family.

It localises to the endoplasmic reticulum membrane. Plays an essential role in the maturation of presomitic mesoderm cells by individual attenuation of both FGF and WNT signaling. In Mus musculus (Mouse), this protein is Protein shisa-3 homolog (Shisa3).